Consider the following 199-residue polypeptide: Thymidine kinase (199 aa).

ATP-binding positions include 15–22 and 88–91; these read GSMFSGKS and DEVQ. Glutamate 89 functions as the Proton acceptor in the catalytic mechanism. Residues cysteine 145, cysteine 148, cysteine 183, and histidine 186 each contribute to the Zn(2+) site.

This sequence belongs to the thymidine kinase family. In terms of assembly, homotetramer.

The protein localises to the cytoplasm. It catalyses the reaction thymidine + ATP = dTMP + ADP + H(+). The sequence is that of Thymidine kinase from Staphylococcus epidermidis (strain ATCC 12228 / FDA PCI 1200).